The sequence spans 283 residues: Elongation factor Ts (283 aa).

The segment at 80–83 (TDFV) is involved in Mg(2+) ion dislocation from EF-Tu.

Belongs to the EF-Ts family.

The protein resides in the cytoplasm. Its function is as follows. Associates with the EF-Tu.GDP complex and induces the exchange of GDP to GTP. It remains bound to the aminoacyl-tRNA.EF-Tu.GTP complex up to the GTP hydrolysis stage on the ribosome. In Salmonella agona (strain SL483), this protein is Elongation factor Ts.